We begin with the raw amino-acid sequence, 491 residues long: Trypanothione reductase (491 aa).

Residue 35 to 51 participates in FAD binding; the sequence is DLQKHHGPPHYAALGGT. A disulfide bridge connects residues Cys-52 and Cys-57. The active-site Proton acceptor is the His-461.

It belongs to the class-I pyridine nucleotide-disulfide oxidoreductase family. Homodimer. The cofactor is FAD. In terms of processing, the N-terminus is blocked.

It localises to the cytoplasm. The enzyme catalyses trypanothione + NADP(+) = trypanothione disulfide + NADPH + H(+). Trypanothione is the parasite analog of glutathione; this enzyme is the equivalent of glutathione reductase. The protein is Trypanothione reductase (TPR) of Crithidia fasciculata.